A 91-amino-acid polypeptide reads, in one-letter code: Large ribosomal subunit protein bL27 (91 aa).

Positions 1–22 (MAHKKGQGSSRNGRDSNPQYRG) are disordered. The span at 7–19 (QGSSRNGRDSNPQ) shows a compositional bias: polar residues.

Belongs to the bacterial ribosomal protein bL27 family.

This is Large ribosomal subunit protein bL27 from Myxococcus xanthus (strain DK1622).